A 129-amino-acid chain; its full sequence is Small ribosomal subunit protein uS11 (129 aa).

The protein belongs to the universal ribosomal protein uS11 family. As to quaternary structure, part of the 30S ribosomal subunit. Interacts with proteins S7 and S18. Binds to IF-3.

Located on the platform of the 30S subunit, it bridges several disparate RNA helices of the 16S rRNA. Forms part of the Shine-Dalgarno cleft in the 70S ribosome. This is Small ribosomal subunit protein uS11 from Hyphomonas neptunium (strain ATCC 15444).